The primary structure comprises 519 residues: Maturase K (519 aa).

This sequence belongs to the intron maturase 2 family. MatK subfamily.

It is found in the plastid. The protein resides in the chloroplast. Usually encoded in the trnK tRNA gene intron. Probably assists in splicing its own and other chloroplast group II introns. The protein is Maturase K of Aesculus pavia (Red buckeye).